We begin with the raw amino-acid sequence, 430 residues long: Adenylosuccinate synthetase (430 aa).

Residues 12–18 (GDEGKGK) and 40–42 (GHT) each bind GTP. The active-site Proton acceptor is Asp13. Residues Asp13 and Gly40 each coordinate Mg(2+). Residues 13 to 16 (DEGK), 38 to 41 (NAGH), Thr130, Arg144, Gln224, Thr239, and Arg303 contribute to the IMP site. His41 serves as the catalytic Proton donor. 299-305 (TNTGRAR) lines the substrate pocket. Residues Arg305, 331–333 (KLD), and 413–415 (STS) each bind GTP.

The protein belongs to the adenylosuccinate synthetase family. Homodimer. Mg(2+) is required as a cofactor.

It localises to the cytoplasm. The enzyme catalyses IMP + L-aspartate + GTP = N(6)-(1,2-dicarboxyethyl)-AMP + GDP + phosphate + 2 H(+). The protein operates within purine metabolism; AMP biosynthesis via de novo pathway; AMP from IMP: step 1/2. Functionally, plays an important role in the de novo pathway of purine nucleotide biosynthesis. Catalyzes the first committed step in the biosynthesis of AMP from IMP. The sequence is that of Adenylosuccinate synthetase from Hyphomonas neptunium (strain ATCC 15444).